The sequence spans 246 residues: Type III pantothenate kinase (246 aa).

6–13 (DVGNSRIK) contributes to the ATP binding site. Substrate contacts are provided by residues Tyr93 and 100–103 (GSDR). Asp102 (proton acceptor) is an active-site residue. ATP is bound at residue Thr125. Thr175 provides a ligand contact to substrate.

This sequence belongs to the type III pantothenate kinase family. As to quaternary structure, homodimer. It depends on NH4(+) as a cofactor. Requires K(+) as cofactor.

The protein localises to the cytoplasm. The enzyme catalyses (R)-pantothenate + ATP = (R)-4'-phosphopantothenate + ADP + H(+). It functions in the pathway cofactor biosynthesis; coenzyme A biosynthesis; CoA from (R)-pantothenate: step 1/5. Functionally, catalyzes the phosphorylation of pantothenate (Pan), the first step in CoA biosynthesis. In Dichelobacter nodosus (strain VCS1703A), this protein is Type III pantothenate kinase.